Here is a 337-residue protein sequence, read N- to C-terminus: Succinylglutamate desuccinylase (337 aa).

3 residues coordinate Zn(2+): H59, E62, and H152. E216 is an active-site residue.

It belongs to the AspA/AstE family. Succinylglutamate desuccinylase subfamily. It depends on Zn(2+) as a cofactor.

It catalyses the reaction N-succinyl-L-glutamate + H2O = L-glutamate + succinate. It functions in the pathway amino-acid degradation; L-arginine degradation via AST pathway; L-glutamate and succinate from L-arginine: step 5/5. In terms of biological role, transforms N(2)-succinylglutamate into succinate and glutamate. The polypeptide is Succinylglutamate desuccinylase (Ectopseudomonas mendocina (strain ymp) (Pseudomonas mendocina)).